A 126-amino-acid polypeptide reads, in one-letter code: Fatty acid-binding protein 2, liver (126 aa).

Residues 54–56, 99–101, and arginine 121 each bind cholate; these read TPN and HIQ.

This sequence belongs to the calycin superfamily. Fatty-acid binding protein (FABP) family.

The protein resides in the cytoplasm. Its function is as follows. Binds free fatty acids and their coenzyme A derivatives, bilirubin, and some other small molecules in the cytoplasm. May be involved in intracellular lipid transport. The specificity of axolotl L-FABP differs from that of LB-FABP. Binds 2 ligands per protein molecule. The sequence is that of Fatty acid-binding protein 2, liver from Ambystoma mexicanum (Axolotl).